Here is a 112-residue protein sequence, read N- to C-terminus: Small ribosomal subunit protein bS6 (112 aa).

This sequence belongs to the bacterial ribosomal protein bS6 family.

Its function is as follows. Binds together with bS18 to 16S ribosomal RNA. This is Small ribosomal subunit protein bS6 from Chlamydia felis (strain Fe/C-56) (Chlamydophila felis).